A 315-amino-acid chain; its full sequence is MYFQRTLKSDLSCQSVGLHSGRKVNMRIRPASSDEGIILVRTDTRYRQMIRVCLENVTDTTLATTIGSSGAAISTVEHILSALSGMGVDNAIIEVDAPEIPIMDGSALPFVNMLKLVGIRTQEKLKKYLVVKKPVSVSEGESFAMLAPSSSFEITYKIEFDHPLIKEQSYHLKLSDETYEKEICSSRTFGFLKDVEYLQAKGLALGGSLKNAVILDEKRIINKEGLRSHNEFVKHKILDAIGDLSLIGMPIVGHFIAYKSGHKLNSMLVKALLEQQENWTTASFLNCQDAHGQNTREKFSIRDIPARKILGAIHA.

H78, H235, and D239 together coordinate Zn(2+). The active-site Proton donor is H262.

It belongs to the LpxC family. Zn(2+) serves as cofactor.

The catalysed reaction is a UDP-3-O-[(3R)-3-hydroxyacyl]-N-acetyl-alpha-D-glucosamine + H2O = a UDP-3-O-[(3R)-3-hydroxyacyl]-alpha-D-glucosamine + acetate. Its pathway is glycolipid biosynthesis; lipid IV(A) biosynthesis; lipid IV(A) from (3R)-3-hydroxytetradecanoyl-[acyl-carrier-protein] and UDP-N-acetyl-alpha-D-glucosamine: step 2/6. In terms of biological role, catalyzes the hydrolysis of UDP-3-O-myristoyl-N-acetylglucosamine to form UDP-3-O-myristoylglucosamine and acetate, the committed step in lipid A biosynthesis. This Syntrophus aciditrophicus (strain SB) protein is UDP-3-O-acyl-N-acetylglucosamine deacetylase.